Consider the following 170-residue polypeptide: Metalloproteinase inhibitor 4 (170 aa).

An NTR domain is found at 1 to 105 (ISSEKVVPAS…SLNHHYHLNC (105 aa)). Involved in metalloproteinase-binding stretches follow at residues 6–9 (VVPA) and 48–49 (SS). Disulfide bonds link Cys-107/Cys-154, Cys-112/Cys-117, and Cys-125/Cys-146.

The protein belongs to the protease inhibitor I35 (TIMP) family.

The protein resides in the secreted. In terms of biological role, complexes with metalloproteinases (such as collagenases) and irreversibly inactivates them by binding to their catalytic zinc cofactor. The protein is Metalloproteinase inhibitor 4 (TIMP4) of Oryctolagus cuniculus (Rabbit).